We begin with the raw amino-acid sequence, 258 residues long: Indole-3-glycerol phosphate synthase 2 (258 aa).

This sequence belongs to the TrpC family.

It catalyses the reaction 1-(2-carboxyphenylamino)-1-deoxy-D-ribulose 5-phosphate + H(+) = (1S,2R)-1-C-(indol-3-yl)glycerol 3-phosphate + CO2 + H2O. It participates in amino-acid biosynthesis; L-tryptophan biosynthesis; L-tryptophan from chorismate: step 4/5. The function of the second trp operon in S.coelicolor is to produce tryptophan for the biosynthesis of calcium-dependent antibiotic (CDA). The sequence is that of Indole-3-glycerol phosphate synthase 2 (trpC2) from Streptomyces coelicolor (strain ATCC BAA-471 / A3(2) / M145).